Here is a 31-residue protein sequence, read N- to C-terminus: Cytochrome b6-f complex subunit 6 (31 aa).

The chain crosses the membrane as a helical span at residues 4-24 (LLSYFGFLFAILTLTSVLFIG).

This sequence belongs to the PetL family. As to quaternary structure, the 4 large subunits of the cytochrome b6-f complex are cytochrome b6, subunit IV (17 kDa polypeptide, PetD), cytochrome f and the Rieske protein, while the 4 small subunits are PetG, PetL, PetM and PetN. The complex functions as a dimer.

It is found in the plastid. It localises to the chloroplast thylakoid membrane. Functionally, component of the cytochrome b6-f complex, which mediates electron transfer between photosystem II (PSII) and photosystem I (PSI), cyclic electron flow around PSI, and state transitions. PetL is important for photoautotrophic growth as well as for electron transfer efficiency and stability of the cytochrome b6-f complex. This chain is Cytochrome b6-f complex subunit 6, found in Angiopteris evecta (Mule's foot fern).